An 809-amino-acid chain; its full sequence is Penicillin-binding protein 1A (809 aa).

Topologically, residues methionine 1 to threonine 34 are cytoplasmic. The helical; Signal-anchor for type II membrane protein transmembrane segment at isoleucine 35–valine 55 threads the bilayer. At lysine 56–lysine 809 the chain is on the extracellular side. Residues serine 74 to asparagine 251 form a transglycosylase region. Glutamate 113 (proton donor; for transglycosylase activity) is an active-site residue. The segment at alanine 381–lysine 664 is transpeptidase. Catalysis depends on serine 422, which acts as the Acyl-ester intermediate; for transpeptidase activity. The interval serine 694–lysine 809 is disordered.

In the N-terminal section; belongs to the glycosyltransferase 51 family. The protein in the C-terminal section; belongs to the transpeptidase family.

The protein resides in the cell membrane. The catalysed reaction is [GlcNAc-(1-&gt;4)-Mur2Ac(oyl-L-Ala-gamma-D-Glu-L-Lys-D-Ala-D-Ala)](n)-di-trans,octa-cis-undecaprenyl diphosphate + beta-D-GlcNAc-(1-&gt;4)-Mur2Ac(oyl-L-Ala-gamma-D-Glu-L-Lys-D-Ala-D-Ala)-di-trans,octa-cis-undecaprenyl diphosphate = [GlcNAc-(1-&gt;4)-Mur2Ac(oyl-L-Ala-gamma-D-Glu-L-Lys-D-Ala-D-Ala)](n+1)-di-trans,octa-cis-undecaprenyl diphosphate + di-trans,octa-cis-undecaprenyl diphosphate + H(+). It catalyses the reaction Preferential cleavage: (Ac)2-L-Lys-D-Ala-|-D-Ala. Also transpeptidation of peptidyl-alanyl moieties that are N-acyl substituents of D-alanine.. The protein operates within cell wall biogenesis; peptidoglycan biosynthesis. Functionally, cell wall formation. Synthesis of cross-linked peptidoglycan from the lipid intermediates. The enzyme has a penicillin-insensitive transglycosylase N-terminal domain (formation of linear glycan strands) and a penicillin-sensitive transpeptidase C-terminal domain (cross-linking of the peptide subunits). This chain is Penicillin-binding protein 1A (pbpA), found in Clostridium acetobutylicum (strain ATCC 824 / DSM 792 / JCM 1419 / IAM 19013 / LMG 5710 / NBRC 13948 / NRRL B-527 / VKM B-1787 / 2291 / W).